Consider the following 84-residue polypeptide: Exodeoxyribonuclease 7 small subunit (84 aa).

The protein belongs to the XseB family. As to quaternary structure, heterooligomer composed of large and small subunits.

It localises to the cytoplasm. It catalyses the reaction Exonucleolytic cleavage in either 5'- to 3'- or 3'- to 5'-direction to yield nucleoside 5'-phosphates.. Bidirectionally degrades single-stranded DNA into large acid-insoluble oligonucleotides, which are then degraded further into small acid-soluble oligonucleotides. In Bacillus velezensis (strain DSM 23117 / BGSC 10A6 / LMG 26770 / FZB42) (Bacillus amyloliquefaciens subsp. plantarum), this protein is Exodeoxyribonuclease 7 small subunit.